A 277-amino-acid polypeptide reads, in one-letter code: MPLSSKVSQAPWSLTGKTAVVTGGSRGIGRAIAIHLARKGVRKLAITYVRDLASAESALEEIRKEGIETGIAIQADILNASVGRDLIAQALVGLETSTIDILVNNAALLDPINTPSVEDVTLENFQELMQANCFAPVSIINACMPHLPPSGGRVINISSVASKTPNPGTIVTYGASKAALDSYTRSMAGLFAKDKTATFNTVCVGPTVTDSFRAVSQLYPGEFIKEVAKSFTAADRVGVPEDIAYIVGFLASEEGRWMNGACVSANGGLREALPALS.

The NADP(+) site is built by Ile28, Asp76, and Asn105. Residues Ser158 and Ser159 each act as proton donor in the active site. 3 residues coordinate NADP(+): Tyr173, Lys177, and Thr209. Tyr173 acts as the Proton acceptor in catalysis. Lys177 serves as the catalytic Lowers pKa of active site Tyr.

This sequence belongs to the short-chain dehydrogenases/reductases (SDR) family.

The catalysed reaction is yaequinolone D + NADPH + H(+) = penigequinolone A + NADP(+) + H2O. It carries out the reaction yaequinolone D + NADPH + H(+) = penigequinolone B + NADP(+) + H2O. The protein operates within secondary metabolite biosynthesis. Its pathway is alkaloid biosynthesis. It participates in mycotoxin biosynthesis. In terms of biological role, short chain dehydrogenase; part of the gene cluster that mediates the biosynthesis of penigequinolones, potent insecticidal alkaloids that contain a highly modified 10-carbon prenyl group. The first stage is catalyzed by the nonribosomal peptide synthetase penN that condenses anthranilic acid and O-methyl-L-tyrosine to produce 4'-methoxycyclopeptin. 4'-methoxycyclopeptin is then converted to 4'-methoxydehydrocyclopeptin by the ketoglutarate-dependent dioxygenase penM through dehydrogenation to form a double bond between C-alpha and C-beta of the O-methyltyrosine side chain. PenM also converts its first product methoxydehydrocyclopeptin to 4'-methoxycyclopenin. The following conversion of 4'methoxycyclopenin into 4'-methoxyviridicatin is catalyzed by the cyclopenase penL. 4'-methoxyviridicatin is the precursor of quinolone natural products, and is further converted to quinolinone B. The prenyltransferase penI then catalyzes the canonical Friedel-Crafts alkylation of quinolinone B with dimethylallyl cation to yield dimethylallyl quinolone, which is subjected to FAD-dependent dehydrogenation by the FAD-linked oxidoreductase penH to yield conjugated aryl diene. The delta(3') double bond then serves as the site of the second alkylation with DMAPP catalyzed by the prenyltransferase penG to yield a carbenium ion intermediate, which can be attacked by H(2)O to yield a styrenyl quinolone containing a C3'-hydroxyprenyl chain, or undergo cyclization to yield yaequinolones J1 and J2. The conversion of the styrenyl quinolone into the tetrahydrofuran-containing yaequinolone C is performed by the FAD-dependent monooxygenase penE and involves epoxidation of the terminal C7'-C8' olefin, followed by epoxide ring opening initiated by the C3' hydroxyl group. The predicted cysteine hydrolase penJ acts as an epoxide hydrolase that enhances the rate of the 5-exo-tet cyclization step, increasing the yield of yaequinolone C. PenF catalyzes the cationic rearrangement of the epoxide formed by penE (before ring opening to produce yaequinolone C) into yaequinolone D. Finally, the short-chain dehydrogenase/reductase (SDR)-like reductase penD, catalyzes both the dehydration of yaequinolone D and the reduction of the resulting oxonium to yield penigequinolone. This chain is Short chain dehydrogenase penD, found in Penicillium thymicola.